Reading from the N-terminus, the 581-residue chain is NADH-quinone oxidoreductase subunit C/D (581 aa).

Positions 1–172 (MSAVELVNEL…PPFVMTAARF (172 aa)) are NADH dehydrogenase I subunit C. An NADH dehydrogenase I subunit D region spans residues 196–581 (ELMILNYGPH…IDYVMSDVDR (386 aa)).

It in the N-terminal section; belongs to the complex I 30 kDa subunit family. In the C-terminal section; belongs to the complex I 49 kDa subunit family. NDH-1 is composed of 13 different subunits. Subunits NuoB, CD, E, F, and G constitute the peripheral sector of the complex.

Its subcellular location is the cell inner membrane. The catalysed reaction is a quinone + NADH + 5 H(+)(in) = a quinol + NAD(+) + 4 H(+)(out). Its function is as follows. NDH-1 shuttles electrons from NADH, via FMN and iron-sulfur (Fe-S) centers, to quinones in the respiratory chain. The immediate electron acceptor for the enzyme in this species is believed to be ubiquinone. Couples the redox reaction to proton translocation (for every two electrons transferred, four hydrogen ions are translocated across the cytoplasmic membrane), and thus conserves the redox energy in a proton gradient. The polypeptide is NADH-quinone oxidoreductase subunit C/D (Rhodopseudomonas palustris (strain BisB18)).